The chain runs to 449 residues: MSHITFDYSKVLESFAGQHEIDFLQGQVTEADKLLREGTGPGSDFLGWLDLPENYDKEEFARILTAAEKIKADSEVLVVIGIGGSYLGAKAAIDFLNHHFANLQTAKERKAPQILYAGNSISSTYLADLVEYVQDKEFSVNVISKSGTTTEPAIAFRVFKELLVKKYGQEEANKRIYATTDKVKGAVKVEADANNWETFVVPDNVGGRFSVLTAVGLLPIAASGADITALMEGANAAHKDLSSDKISENIAYQYAAVRNVLYRKGYITEILANYEPSLQYFGEWWKQLAGESEGKDQKGIYPTSANFSTDLHSLGQFIQEGYRNLFETVIRVDNPRKNVIIPELAEDLDGLGYLQGKDVDFVNKKATDGVLLAHTDGGVPNMFVTLPAQDEFTLGYTIYFFELAIAVSGYMNAVNPFDQPGVEAYKRNMFALLGKPGFEALSAELNARL.

The active-site Proton donor is the Glu291. Active-site residues include His312 and Lys426.

It belongs to the GPI family.

It is found in the cytoplasm. The catalysed reaction is alpha-D-glucose 6-phosphate = beta-D-fructose 6-phosphate. It participates in carbohydrate biosynthesis; gluconeogenesis. Its pathway is carbohydrate degradation; glycolysis; D-glyceraldehyde 3-phosphate and glycerone phosphate from D-glucose: step 2/4. Catalyzes the reversible isomerization of glucose-6-phosphate to fructose-6-phosphate. The sequence is that of Glucose-6-phosphate isomerase from Streptococcus pyogenes serotype M2 (strain MGAS10270).